Here is a 291-residue protein sequence, read N- to C-terminus: Formamidopyrimidine-DNA glycosylase (291 aa).

The Schiff-base intermediate with DNA role is filled by P2. The active-site Proton donor is the E3. K58 functions as the Proton donor; for beta-elimination activity in the catalytic mechanism. DNA-binding residues include H100, R123, and K166. An FPG-type zinc finger spans residues 257 to 291 (SVYGREGKECLQCGTPIIRILQSGRSSFYCSQCQK). Catalysis depends on R281, which acts as the Proton donor; for delta-elimination activity.

The protein belongs to the FPG family. Monomer. It depends on Zn(2+) as a cofactor.

The catalysed reaction is Hydrolysis of DNA containing ring-opened 7-methylguanine residues, releasing 2,6-diamino-4-hydroxy-5-(N-methyl)formamidopyrimidine.. It catalyses the reaction 2'-deoxyribonucleotide-(2'-deoxyribose 5'-phosphate)-2'-deoxyribonucleotide-DNA = a 3'-end 2'-deoxyribonucleotide-(2,3-dehydro-2,3-deoxyribose 5'-phosphate)-DNA + a 5'-end 5'-phospho-2'-deoxyribonucleoside-DNA + H(+). Functionally, involved in base excision repair of DNA damaged by oxidation or by mutagenic agents. Acts as a DNA glycosylase that recognizes and removes damaged bases. Has a preference for oxidized purines, such as 7,8-dihydro-8-oxoguanine (8-oxoG). Has AP (apurinic/apyrimidinic) lyase activity and introduces nicks in the DNA strand. Cleaves the DNA backbone by beta-delta elimination to generate a single-strand break at the site of the removed base with both 3'- and 5'-phosphates. This Bartonella tribocorum (strain CIP 105476 / IBS 506) protein is Formamidopyrimidine-DNA glycosylase.